A 126-amino-acid polypeptide reads, in one-letter code: Holo-[acyl-carrier-protein] synthase (126 aa).

D9 and E58 together coordinate Mg(2+).

This sequence belongs to the P-Pant transferase superfamily. AcpS family. It depends on Mg(2+) as a cofactor.

The protein resides in the cytoplasm. It catalyses the reaction apo-[ACP] + CoA = holo-[ACP] + adenosine 3',5'-bisphosphate + H(+). In terms of biological role, transfers the 4'-phosphopantetheine moiety from coenzyme A to a Ser of acyl-carrier-protein. In Escherichia coli (strain ATCC 8739 / DSM 1576 / NBRC 3972 / NCIMB 8545 / WDCM 00012 / Crooks), this protein is Holo-[acyl-carrier-protein] synthase.